The primary structure comprises 80 residues: Putative membrane protein insertion efficiency factor (80 aa).

The interval 61 to 80 is disordered; it reads KTGKDPIPDHFSLKRNQEGE. The segment covering 62 to 80 has biased composition (basic and acidic residues); sequence TGKDPIPDHFSLKRNQEGE.

This sequence belongs to the UPF0161 family.

The protein resides in the cell membrane. Could be involved in insertion of integral membrane proteins into the membrane. The sequence is that of Putative membrane protein insertion efficiency factor from Streptococcus pneumoniae (strain CGSP14).